A 448-amino-acid chain; its full sequence is Inositol polyphosphate 5-phosphatase K (448 aa).

The tract at residues Ile-16–Phe-318 is catalytic. A required for interaction with GPR78 and PAK1 region spans residues Phe-318–Ile-448. The required for ruffle localization stretch occupies residues Glu-321 to Ile-448.

Belongs to the inositol 1,4,5-trisphosphate 5-phosphatase type II family. In terms of assembly, interacts with GPR78; necessary for INPP5K localization at the endoplasmic reticulum. Interacts with PAK1; competes with GPR78. As to expression, ubiquitously expressed with highest levels in skeletal muscle, heart and kidney.

It localises to the endoplasmic reticulum. The protein localises to the cytoplasm. It catalyses the reaction 1D-myo-inositol 1,4,5-trisphosphate + H2O = 1D-myo-inositol 1,4-bisphosphate + phosphate. The catalysed reaction is 1D-myo-inositol 1,3,4,5-tetrakisphosphate + H2O = 1D-myo-inositol 1,3,4-trisphosphate + phosphate. It carries out the reaction a 1,2-diacyl-sn-glycero-3-phospho-(1D-myo-inositol-4,5-bisphosphate) + H2O = a 1,2-diacyl-sn-glycero-3-phospho-(1D-myo-inositol 4-phosphate) + phosphate. The enzyme catalyses a 1,2-diacyl-sn-glycero-3-phospho-(1D-myo-inositol-3,4,5-trisphosphate) + H2O = a 1,2-diacyl-sn-glycero-3-phospho-(1D-myo-inositol-3,4-bisphosphate) + phosphate. It catalyses the reaction 1,2-dioctanoyl-sn-glycero-3-phospho-(1D-myo-inositol-3,4,5-trisphosphate) + H2O = 1,2-dioctanoyl-sn-glycero-3-phospho-(1D-myo-inositol-3,4-bisphosphate) + phosphate. In terms of biological role, inositol 5-phosphatase which acts on inositol 1,4,5-trisphosphate, inositol 1,3,4,5-tetrakisphosphate, phosphatidylinositol 4,5-bisphosphate and phosphatidylinositol 3,4,5-trisphosphate. Has 6-fold higher affinity for phosphatidylinositol 4,5-bisphosphate than for inositol 1,4,5-trisphosphate. Negatively regulates assembly of the actin cytoskeleton. Controls insulin-dependent glucose uptake among inositol 3,4,5-trisphosphate phosphatases; therefore, is the specific regulator for insulin signaling in skeletal muscle. This chain is Inositol polyphosphate 5-phosphatase K, found in Homo sapiens (Human).